A 398-amino-acid chain; its full sequence is Acetate kinase (398 aa).

N9 contacts Mg(2+). K16 contacts ATP. Substrate is bound at residue R90. D147 serves as the catalytic Proton donor/acceptor. ATP contacts are provided by residues H207–G211, D282–R284, and G330–N334. E384 provides a ligand contact to Mg(2+).

Belongs to the acetokinase family. Homodimer. Mg(2+) is required as a cofactor. The cofactor is Mn(2+).

Its subcellular location is the cytoplasm. The catalysed reaction is acetate + ATP = acetyl phosphate + ADP. It participates in metabolic intermediate biosynthesis; acetyl-CoA biosynthesis; acetyl-CoA from acetate: step 1/2. Catalyzes the formation of acetyl phosphate from acetate and ATP. Can also catalyze the reverse reaction. This Staphylococcus carnosus (strain TM300) protein is Acetate kinase.